The sequence spans 506 residues: ATP synthase subunit alpha, chloroplastic (506 aa).

170–177 (GDRQTGKT) serves as a coordination point for ATP.

The protein belongs to the ATPase alpha/beta chains family. As to quaternary structure, F-type ATPases have 2 components, CF(1) - the catalytic core - and CF(0) - the membrane proton channel. CF(1) has five subunits: alpha(3), beta(3), gamma(1), delta(1), epsilon(1). CF(0) has four main subunits: a, b, b' and c.

The protein resides in the plastid. The protein localises to the chloroplast thylakoid membrane. The enzyme catalyses ATP + H2O + 4 H(+)(in) = ADP + phosphate + 5 H(+)(out). Functionally, produces ATP from ADP in the presence of a proton gradient across the membrane. The alpha chain is a regulatory subunit. This Chlorokybus atmophyticus (Soil alga) protein is ATP synthase subunit alpha, chloroplastic.